We begin with the raw amino-acid sequence, 130 residues long: Fluoride-specific ion channel FluC (130 aa).

The next 4 membrane-spanning stretches (helical) occupy residues 2–22, 36–56, 71–91, and 100–120; these read GLLL…RFAL, GILL…AFLI, FLLV…SLDI, and IFIA…AVIL. Na(+) is bound by residues Gly-79 and Thr-82.

The protein belongs to the fluoride channel Fluc/FEX (TC 1.A.43) family.

It is found in the cell inner membrane. The catalysed reaction is fluoride(in) = fluoride(out). Its activity is regulated as follows. Na(+) is not transported, but it plays an essential structural role and its presence is essential for fluoride channel function. Its function is as follows. Fluoride-specific ion channel. Important for reducing fluoride concentration in the cell, thus reducing its toxicity. This chain is Fluoride-specific ion channel FluC, found in Francisella tularensis subsp. tularensis (strain FSC 198).